Consider the following 149-residue polypeptide: Ribonuclease pancreatic (149 aa).

An N-terminal signal peptide occupies residues 1–25 (MGLEKSLILFPLFFLLLGWVQPSLG). Residues Lys32 and Arg35 each coordinate substrate. His37 acts as the Proton acceptor in catalysis. Disulfide bonds link Cys51–Cys109, Cys65–Cys120, Cys83–Cys135, and Cys90–Cys97. Substrate contacts are provided by residues 66-70 (KPVNT) and Lys91. His144 functions as the Proton donor in the catalytic mechanism.

The protein belongs to the pancreatic ribonuclease family. Monomer. Interacts with and forms tight 1:1 complexes with RNH1. Dimerization of two such complexes may occur. Interaction with RNH1 inhibits this protein. Pancreas.

The protein resides in the secreted. The enzyme catalyses an [RNA] containing cytidine + H2O = an [RNA]-3'-cytidine-3'-phosphate + a 5'-hydroxy-ribonucleotide-3'-[RNA].. It catalyses the reaction an [RNA] containing uridine + H2O = an [RNA]-3'-uridine-3'-phosphate + a 5'-hydroxy-ribonucleotide-3'-[RNA].. Endonuclease that catalyzes the cleavage of RNA on the 3' side of pyrimidine nucleotides. Acts on single-stranded and double-stranded RNA. This is Ribonuclease pancreatic (Rnase1) from Mus musculus (Mouse).